Reading from the N-terminus, the 152-residue chain is Peptide deformylase (152 aa).

2 residues coordinate Fe cation: C88 and H130. E131 is an active-site residue. Position 134 (H134) interacts with Fe cation.

Belongs to the polypeptide deformylase family. Fe(2+) serves as cofactor.

It carries out the reaction N-terminal N-formyl-L-methionyl-[peptide] + H2O = N-terminal L-methionyl-[peptide] + formate. Functionally, removes the formyl group from the N-terminal Met of newly synthesized proteins. Requires at least a dipeptide for an efficient rate of reaction. N-terminal L-methionine is a prerequisite for activity but the enzyme has broad specificity at other positions. This is Peptide deformylase from Syntrophomonas wolfei subsp. wolfei (strain DSM 2245B / Goettingen).